The following is a 301-amino-acid chain: N-acetylmuramic acid 6-phosphate etherase (301 aa).

In terms of domain architecture, SIS spans Ile-57–Lys-220. The active-site Proton donor is Glu-85. Glu-116 is a catalytic residue.

This sequence belongs to the GCKR-like family. MurNAc-6-P etherase subfamily. As to quaternary structure, homodimer.

The catalysed reaction is N-acetyl-D-muramate 6-phosphate + H2O = N-acetyl-D-glucosamine 6-phosphate + (R)-lactate. The protein operates within amino-sugar metabolism; 1,6-anhydro-N-acetylmuramate degradation. It participates in amino-sugar metabolism; N-acetylmuramate degradation. Its pathway is cell wall biogenesis; peptidoglycan recycling. In terms of biological role, specifically catalyzes the cleavage of the D-lactyl ether substituent of MurNAc 6-phosphate, producing GlcNAc 6-phosphate and D-lactate. Together with AnmK, is also required for the utilization of anhydro-N-acetylmuramic acid (anhMurNAc) either imported from the medium or derived from its own cell wall murein, and thus plays a role in cell wall recycling. This chain is N-acetylmuramic acid 6-phosphate etherase, found in Photobacterium profundum (strain SS9).